Here is a 412-residue protein sequence, read N- to C-terminus: Interferon-inducible GTPase 5 (412 aa).

The IRG-type G domain occupies 51–234 (TRLEVGVTGE…PMLVTTWEHD (184 aa)). GTP-binding positions include 60–67 (ESGAGKSS), 85–89 (TGVVE), and 215–217 (SNL). Phosphoserine is present on residues Ser246 and Ser303.

It belongs to the TRAFAC class dynamin-like GTPase superfamily. IRG family. As to quaternary structure, interacts with PLIN2/ADRP and COX4I1/COXIV. As to expression, expressed in spermatozoa tails from the testis and epididymis, where it may be a component of the fibrous sheath (at protein level).

The protein localises to the cell projection. The protein resides in the cilium. It localises to the flagellum. It is found in the lipid droplet. It carries out the reaction GTP + H2O = GDP + phosphate + H(+). Required for sperm motility and therefore male fertility, via positive regulation of spermatozoa fibrous sheath formation. The sequence is that of Interferon-inducible GTPase 5 from Mus musculus (Mouse).